A 329-amino-acid polypeptide reads, in one-letter code: 4-hydroxy-3-methylbut-2-enyl diphosphate reductase (329 aa).

C27 contributes to the [4Fe-4S] cluster binding site. H56 and H89 together coordinate (2E)-4-hydroxy-3-methylbut-2-enyl diphosphate. Dimethylallyl diphosphate contacts are provided by H56 and H89. Residues H56 and H89 each coordinate isopentenyl diphosphate. [4Fe-4S] cluster is bound at residue C111. H139 serves as a coordination point for (2E)-4-hydroxy-3-methylbut-2-enyl diphosphate. H139 serves as a coordination point for dimethylallyl diphosphate. H139 is a binding site for isopentenyl diphosphate. The Proton donor role is filled by E141. T179 is a (2E)-4-hydroxy-3-methylbut-2-enyl diphosphate binding site. A [4Fe-4S] cluster-binding site is contributed by C209. S237, S238, N239, and S281 together coordinate (2E)-4-hydroxy-3-methylbut-2-enyl diphosphate. S237, S238, N239, and S281 together coordinate dimethylallyl diphosphate. Isopentenyl diphosphate-binding residues include S237, S238, N239, and S281.

This sequence belongs to the IspH family. [4Fe-4S] cluster is required as a cofactor.

The enzyme catalyses isopentenyl diphosphate + 2 oxidized [2Fe-2S]-[ferredoxin] + H2O = (2E)-4-hydroxy-3-methylbut-2-enyl diphosphate + 2 reduced [2Fe-2S]-[ferredoxin] + 2 H(+). The catalysed reaction is dimethylallyl diphosphate + 2 oxidized [2Fe-2S]-[ferredoxin] + H2O = (2E)-4-hydroxy-3-methylbut-2-enyl diphosphate + 2 reduced [2Fe-2S]-[ferredoxin] + 2 H(+). It functions in the pathway isoprenoid biosynthesis; dimethylallyl diphosphate biosynthesis; dimethylallyl diphosphate from (2E)-4-hydroxy-3-methylbutenyl diphosphate: step 1/1. The protein operates within isoprenoid biosynthesis; isopentenyl diphosphate biosynthesis via DXP pathway; isopentenyl diphosphate from 1-deoxy-D-xylulose 5-phosphate: step 6/6. In terms of biological role, catalyzes the conversion of 1-hydroxy-2-methyl-2-(E)-butenyl 4-diphosphate (HMBPP) into a mixture of isopentenyl diphosphate (IPP) and dimethylallyl diphosphate (DMAPP). Acts in the terminal step of the DOXP/MEP pathway for isoprenoid precursor biosynthesis. The polypeptide is 4-hydroxy-3-methylbut-2-enyl diphosphate reductase (Methylibium petroleiphilum (strain ATCC BAA-1232 / LMG 22953 / PM1)).